The primary structure comprises 495 residues: Cytochrome P450 94C1 (495 aa).

The helical transmembrane segment at 2 to 22 threads the bilayer; it reads LLIISFTIVSFFFIIIFSLFH. Heme is bound at residue Cys439.

It belongs to the cytochrome P450 family. It depends on heme as a cofactor.

The protein localises to the membrane. Its subcellular location is the endoplasmic reticulum membrane. The enzyme catalyses a 12-hydroxyjasmonyl-L-alpha-amino acid + 2 reduced [NADPH--hemoprotein reductase] + 2 O2 = a 12-hydroxy-12-oxojasmonyl-L-alpha-amino acid + 2 oxidized [NADPH--hemoprotein reductase] + 3 H2O + 3 H(+). In terms of biological role, involved in the oxidation of the plant hormone jasmonoyl-L-isoleucine (JA-Ile), a bioactive phytohormone of the jasmonate-mediated signaling pathway. Converts 12-hydroxy-JA-Ile (12OH-JA-Ile) to the carboxy-derivative 12COOH-JA-Ile. Exerts negative feedback control on JA-Ile levels and plays a role in attenuation of jasmonate responses. Also functions as in-chain fatty acids hydroxylase in vitro. Catalyzes the hydroxylation of 12-hydroxy-jasmonoyl-L-phenylalanine (12OH-JA-Phe) in vitro. Converts 12OH-JA-Phe to the carboxy-derivative 12COOH-JA-Phe. The chain is Cytochrome P450 94C1 from Arabidopsis thaliana (Mouse-ear cress).